Reading from the N-terminus, the 351-residue chain is Transmembrane and coiled-coil domain-containing protein 5B (351 aa).

Residues 17–214 (EIPKLEITKQ…WRSSIQSAKT (198 aa)) adopt a coiled-coil conformation. The chain crosses the membrane as a helical span at residues 292–312 (IFVVMIFFRLLGYVLFYLQYI).

It belongs to the TMCO5 family.

It localises to the membrane. The polypeptide is Transmembrane and coiled-coil domain-containing protein 5B (TMCO5B) (Bos taurus (Bovine)).